The sequence spans 1593 residues: DNA-directed RNA polymerase subunit beta' (1593 aa).

Zn(2+) is bound by residues Cys-74, Cys-76, Cys-89, and Cys-92. 3 residues coordinate Mg(2+): Asp-648, Asp-650, and Asp-652. Zn(2+)-binding residues include Cys-1026, Cys-1100, Cys-1107, and Cys-1110.

Belongs to the RNA polymerase beta' chain family. As to quaternary structure, the RNAP catalytic core consists of 2 alpha, 1 beta, 1 beta' and 1 omega subunit. When a sigma factor is associated with the core the holoenzyme is formed, which can initiate transcription. The cofactor is Mg(2+). Zn(2+) serves as cofactor.

It carries out the reaction RNA(n) + a ribonucleoside 5'-triphosphate = RNA(n+1) + diphosphate. DNA-dependent RNA polymerase catalyzes the transcription of DNA into RNA using the four ribonucleoside triphosphates as substrates. The polypeptide is DNA-directed RNA polymerase subunit beta' (Endomicrobium trichonymphae).